We begin with the raw amino-acid sequence, 310 residues long: Cysteine synthase (310 aa).

Lys-46 carries the N6-(pyridoxal phosphate)lysine modification. Residues Asn-76, 180–184 (GTGGT), and Ser-268 contribute to the pyridoxal 5'-phosphate site.

This sequence belongs to the cysteine synthase/cystathionine beta-synthase family. In terms of assembly, homodimer. Requires pyridoxal 5'-phosphate as cofactor.

The enzyme catalyses O-acetyl-L-serine + hydrogen sulfide = L-cysteine + acetate. It participates in amino-acid biosynthesis; L-cysteine biosynthesis; L-cysteine from L-serine: step 2/2. This chain is Cysteine synthase (cysK), found in Staphylococcus aureus (strain Mu50 / ATCC 700699).